A 289-amino-acid chain; its full sequence is Diaminopimelate epimerase (289 aa).

Asn17, Gln47, and Asn67 together coordinate substrate. Cys76 functions as the Proton donor in the catalytic mechanism. Substrate contacts are provided by residues 77 to 78 (GN), Asn164, Asn198, and 216 to 217 (ER). Cys225 functions as the Proton acceptor in the catalytic mechanism. Residue 226–227 (GS) participates in substrate binding.

The protein belongs to the diaminopimelate epimerase family. As to quaternary structure, homodimer.

The protein resides in the cytoplasm. The enzyme catalyses (2S,6S)-2,6-diaminopimelate = meso-2,6-diaminopimelate. Its pathway is amino-acid biosynthesis; L-lysine biosynthesis via DAP pathway; DL-2,6-diaminopimelate from LL-2,6-diaminopimelate: step 1/1. Its function is as follows. Catalyzes the stereoinversion of LL-2,6-diaminopimelate (L,L-DAP) to meso-diaminopimelate (meso-DAP), a precursor of L-lysine and an essential component of the bacterial peptidoglycan. In Bradyrhizobium sp. (strain ORS 278), this protein is Diaminopimelate epimerase.